Here is a 511-residue protein sequence, read N- to C-terminus: ATP synthase subunit alpha (511 aa).

169–176 (GDRQTGKT) contacts ATP.

Belongs to the ATPase alpha/beta chains family. In terms of assembly, F-type ATPases have 2 components, CF(1) - the catalytic core - and CF(0) - the membrane proton channel. CF(1) has five subunits: alpha(3), beta(3), gamma(1), delta(1), epsilon(1). CF(0) has three main subunits: a(1), b(2) and c(9-12). The alpha and beta chains form an alternating ring which encloses part of the gamma chain. CF(1) is attached to CF(0) by a central stalk formed by the gamma and epsilon chains, while a peripheral stalk is formed by the delta and b chains.

Its subcellular location is the cell inner membrane. It carries out the reaction ATP + H2O + 4 H(+)(in) = ADP + phosphate + 5 H(+)(out). Its function is as follows. Produces ATP from ADP in the presence of a proton gradient across the membrane. The alpha chain is a regulatory subunit. The polypeptide is ATP synthase subunit alpha (Janthinobacterium sp. (strain Marseille) (Minibacterium massiliensis)).